The sequence spans 189 residues: GTP cyclohydrolase 1 (189 aa).

Zn(2+) is bound by residues Cys-78, His-81, and Cys-150.

It belongs to the GTP cyclohydrolase I family. Homomer.

The enzyme catalyses GTP + H2O = 7,8-dihydroneopterin 3'-triphosphate + formate + H(+). Its pathway is cofactor biosynthesis; 7,8-dihydroneopterin triphosphate biosynthesis; 7,8-dihydroneopterin triphosphate from GTP: step 1/1. The sequence is that of GTP cyclohydrolase 1 from Bacillus anthracis (strain A0248).